The following is a 1042-amino-acid chain: Isoleucine--tRNA ligase (1042 aa).

A 'HIGH' region motif is present at residues 59-69 (PFANGLPHYGH). Residues 619–623 (KMSKS) carry the 'KMSKS' region motif. K622 provides a ligand contact to ATP.

The protein belongs to the class-I aminoacyl-tRNA synthetase family. IleS type 2 subfamily. In terms of assembly, monomer. Zn(2+) serves as cofactor.

It localises to the cytoplasm. It catalyses the reaction tRNA(Ile) + L-isoleucine + ATP = L-isoleucyl-tRNA(Ile) + AMP + diphosphate. Catalyzes the attachment of isoleucine to tRNA(Ile). As IleRS can inadvertently accommodate and process structurally similar amino acids such as valine, to avoid such errors it has two additional distinct tRNA(Ile)-dependent editing activities. One activity is designated as 'pretransfer' editing and involves the hydrolysis of activated Val-AMP. The other activity is designated 'posttransfer' editing and involves deacylation of mischarged Val-tRNA(Ile). In Nocardia farcinica (strain IFM 10152), this protein is Isoleucine--tRNA ligase.